A 141-amino-acid polypeptide reads, in one-letter code: Large ribosomal subunit protein uL11 (141 aa).

This sequence belongs to the universal ribosomal protein uL11 family. In terms of assembly, part of the ribosomal stalk of the 50S ribosomal subunit. Interacts with L10 and the large rRNA to form the base of the stalk. L10 forms an elongated spine to which L12 dimers bind in a sequential fashion forming a multimeric L10(L12)X complex. One or more lysine residues are methylated.

Forms part of the ribosomal stalk which helps the ribosome interact with GTP-bound translation factors. This Lacticaseibacillus casei (strain BL23) (Lactobacillus casei) protein is Large ribosomal subunit protein uL11.